A 1465-amino-acid polypeptide reads, in one-letter code: DNA polymerase alpha catalytic subunit (1465 aa).

Disordered stretches follow at residues 20–39 (GSFAASRARREKKSKKGRQE) and 105–135 (LEDDALDTCGKGSDGKAHRKDRKDVKKPSVT). Over residues 26-35 (RARREKKSKK) the composition is skewed to basic residues. Residue threonine 180 is modified to Phosphothreonine. Phosphoserine is present on residues serine 192 and serine 215. Position 230 is an N6-acetyllysine (lysine 230). A disordered region spans residues 261–297 (DESMDTEKVDEKPVTAKTWDQETEPVERVEHEADPER). Composition is skewed to basic and acidic residues over residues 265-274 (DTEKVDEKPV) and 285-297 (PVERVEHEADPER). The interval 654 to 719 (RINECKVPYW…YHLSELVQQI (66 aa)) is DNA-binding. An N6-succinyllysine modification is found at lysine 974. A DNA-binding region spans residues 1249 to 1380 (QFRVHQYHKD…NGPLCPVCMK (132 aa)). Cysteine 1287, cysteine 1290, cysteine 1314, cysteine 1319, cysteine 1352, cysteine 1357, cysteine 1375, and cysteine 1378 together coordinate Zn(2+). Residues 1287–1317 (CPSCGTENIYDNVFEGSGLDMEPSLYRCSNV) form a CysA-type zinc finger. A CysB motif motif is present at residues 1352-1378 (CEEPTCCSRLRRLPLHFSRNGPLCPVC).

Belongs to the DNA polymerase type-B family. As to quaternary structure, component of the alpha DNA polymerase complex (also known as the alpha DNA polymerase-primase complex) consisting of four subunits: the catalytic subunit POLA1, the regulatory subunit POLA2, and the primase complex subunits PRIM1 and PRIM2 respectively. Within the complex, POLA1 directly interacts with PRIM2. Interacts with PARP1; this interaction functions as part of the control of replication fork progression. Interacts with MCM10 and WDHD1; these interactions recruit the polymerase alpha complex to the pre-replicative complex bound to DNA. Interacts with RPA1; this interaction stabilizes the replicative complex and reduces the misincorporation rate of DNA polymerase alpha by acting as a fidelity clamp. Expressed in those zones containing proliferating cells in the developing embryonic neocortex, as well as in the lateral and medial ganglionic eminences. After birth, expressed in cells that remain proliferating in the ventricular and subventricular zone of the striatum.

The protein localises to the nucleus. Its subcellular location is the cytoplasm. It is found in the cytosol. The enzyme catalyses DNA(n) + a 2'-deoxyribonucleoside 5'-triphosphate = DNA(n+1) + diphosphate. In terms of biological role, catalytic subunit of the DNA polymerase alpha complex (also known as the alpha DNA polymerase-primase complex) which plays an essential role in the initiation of DNA synthesis. During the S phase of the cell cycle, the DNA polymerase alpha complex (composed of a catalytic subunit POLA1, a regulatory subunit POLA2 and two primase subunits PRIM1 and PRIM2) is recruited to DNA at the replicative forks via direct interactions with MCM10 and WDHD1. The primase subunit of the polymerase alpha complex initiates DNA synthesis by oligomerising short RNA primers on both leading and lagging strands. These primers are initially extended by the polymerase alpha catalytic subunit and subsequently transferred to polymerase delta and polymerase epsilon for processive synthesis on the lagging and leading strand, respectively. The reason this transfer occurs is because the polymerase alpha has limited processivity and lacks intrinsic 3' exonuclease activity for proofreading error, and therefore is not well suited for replicating long complexes. In the cytosol, responsible for a substantial proportion of the physiological concentration of cytosolic RNA:DNA hybrids, which are necessary to prevent spontaneous activation of type I interferon responses. The sequence is that of DNA polymerase alpha catalytic subunit (Pola1) from Mus musculus (Mouse).